An 839-amino-acid polypeptide reads, in one-letter code: Oxidation resistance protein 1 (839 aa).

Residues 38–91 (DYLREPAPGDPGCGPGELRPPSPTSPEGPDTGQKKTLDKKDGRRMSFQKPKGTI) form a disordered region. Residues 69 to 81 (GQKKTLDKKDGRR) are compositionally biased toward basic and acidic residues. A Phosphoserine modification is found at S83. Residues 91–134 (IEYTVESRDSLNSIALKFDTTPNELVQLNKLFSRAVVTGQVLYV) form the LysM domain. T111 is subject to Phosphothreonine. The span at 140 to 161 (VSSVESSPSLSPVSPLSPTSSE) shows a compositional bias: low complexity. The disordered stretch occupies residues 140 to 195 (VSSVESSPSLSPVSPLSPTSSEAEFDKTTTPDVVHPKEAPPSSTESSIRPARVVSS). A compositionally biased stretch (basic and acidic residues) spans 163 to 177 (EFDKTTTPDVVHPKE). Phosphoserine occurs at positions 194, 195, and 197. The GRAM domain maps to 206–261 (KFLKINCKYITNGKGTVSGVLLVTPNNIMFDPHKTDPLVQENGCEEYGIMCPMEEV). Residues S287, S327, and S329 each carry the phosphoserine modification. 2 disordered regions span residues 292–401 (CHSK…VGAL) and 415–540 (KEGD…SLLK). Phosphothreonine is present on T334. The residue at position 339 (S339) is a Phosphoserine. A compositionally biased stretch (basic and acidic residues) spans 340-356 (PIREELPSSELRQEKSS). Polar residues-rich tracts occupy residues 357–378 (DASSESVQTVSQIEVESLTAAS) and 387–397 (TNANSGRSSSE). 2 stretches are compositionally biased toward basic and acidic residues: residues 433–450 (QSTDIKGQDNQDSFHHEN) and 469–497 (LTEKPTVLKDQQGKELKRDSETEVEELRK). At S488 the chain carries Phosphoserine. The span at 502 to 519 (HSMQQAKQQRDTIQQVAQ) shows a compositional bias: polar residues. Residues 543-570 (RRHRLHKFLCLRVGKPMRKTFVSQASAT) form a mediates oxidative antimutator activity region. The disordered stretch occupies residues 648-677 (TREDINSKQAAPAKADLEPESFRPNLSDPS). Positions 678–839 (ELLLPDQIEK…IQDIEIWAFE (162 aa)) constitute a TLDc domain.

It belongs to the OXR1 family.

It is found in the mitochondrion. May be involved in protection from oxidative damage. The sequence is that of Oxidation resistance protein 1 (Oxr1) from Rattus norvegicus (Rat).